Consider the following 365-residue polypeptide: 2-aminoethylphosphonate--pyruvate transaminase (365 aa).

The residue at position 194 (lysine 194) is an N6-(pyridoxal phosphate)lysine.

It belongs to the class-V pyridoxal-phosphate-dependent aminotransferase family. PhnW subfamily. In terms of assembly, homodimer. Pyridoxal 5'-phosphate is required as a cofactor.

It carries out the reaction (2-aminoethyl)phosphonate + pyruvate = phosphonoacetaldehyde + L-alanine. Functionally, involved in phosphonate degradation. This is 2-aminoethylphosphonate--pyruvate transaminase from Bacillus mycoides (strain KBAB4) (Bacillus weihenstephanensis).